We begin with the raw amino-acid sequence, 123 residues long: Small ribosomal subunit protein uS13 (123 aa).

The segment at 95 to 123 is disordered; it reads GLPVRGQRTKTNARTRKGPARTVAGKKKK.

Belongs to the universal ribosomal protein uS13 family. Part of the 30S ribosomal subunit. Forms a loose heterodimer with protein S19. Forms two bridges to the 50S subunit in the 70S ribosome.

Functionally, located at the top of the head of the 30S subunit, it contacts several helices of the 16S rRNA. In the 70S ribosome it contacts the 23S rRNA (bridge B1a) and protein L5 of the 50S subunit (bridge B1b), connecting the 2 subunits; these bridges are implicated in subunit movement. Contacts the tRNAs in the A and P-sites. In Heliobacterium modesticaldum (strain ATCC 51547 / Ice1), this protein is Small ribosomal subunit protein uS13.